Consider the following 574-residue polypeptide: Serine/arginine repetitive matrix protein 4 (574 aa).

5 disordered regions span residues L45–D217, I257–S291, D366–L422, Y454–R508, and R526–R574. Over residues P51–G72 the composition is skewed to basic and acidic residues. Composition is skewed to basic residues over residues H73–R88, P102–S120, and V128–A184. Residues N194–D217 show a composition bias toward basic and acidic residues. The span at G275 to T289 shows a compositional bias: polar residues. Positions D366–R385 are enriched in basic and acidic residues. The span at R405 to L422 shows a compositional bias: low complexity. Positions Y454–R477 are enriched in basic residues. Residues D478 to R487 show a composition bias toward basic and acidic residues. Over residues I496 to R508 the composition is skewed to low complexity. The segment covering R526–S539 has biased composition (basic residues). Over residues H540 to S559 the composition is skewed to low complexity. Residues R560–R574 are compositionally biased toward basic residues.

The protein belongs to the nSR100 family.

The protein localises to the nucleus. Splicing factor specifically required for neural cell differentiation. Acts in conjunction with nPTB/PTBP2 by binding directly to its regulated target transcripts and promotes neural-specific exon inclusion in many genes that function in neural cell differentiation. Required to promote the inclusion of neural-specific exon 10 in nPTB/PTBP2, leading to increased expression of neural-specific nPTB/PTBP2. The polypeptide is Serine/arginine repetitive matrix protein 4 (srrm4) (Danio rerio (Zebrafish)).